Reading from the N-terminus, the 194-residue chain is Mitochondrial import inner membrane translocase subunit Tim22 (194 aa).

Cystine bridges form between Cys69–Cys141 and Cys160–Cys179. 3 consecutive transmembrane segments (helical) span residues 74–94 (VLAC…TAGI), 123–143 (MSYA…ECLV), and 170–190 (AGVK…AAID).

This sequence belongs to the Tim17/Tim22/Tim23 family. As to quaternary structure, component of the TIM22 complex, whose core is composed of TIMM22, associated with peripheral protein FXC1/TIMM10B and the 70 kDa heterohexamer. In most cases, the 70 kDa complex is composed of TIMM9 and TIMM10 (TIMM10A or TIMM10B). A small fraction of the 70 kDa complex is composed of TIMM8 (TIMM8A/DDP1 or TIMM8B/DDP2) and TIMM13. The TIM22 complex also contains AGK and TIMM29. Interacts directly with TIMM9, TIMM10A and FXC1/TIMM10B. Interacts (when oxidized) with TIMM29; interaction is direct. Disulfide bonds promote efficient assembly of the TIM22 complex.

It localises to the mitochondrion inner membrane. Its function is as follows. Essential core component of the TIM22 complex, a complex that mediates the import and insertion of multi-pass transmembrane proteins into the mitochondrial inner membrane. In the TIM22 complex, it constitutes the voltage-activated and signal-gated channel. Forms a twin-pore translocase that uses the membrane potential as external driving force in 2 voltage-dependent steps. This is Mitochondrial import inner membrane translocase subunit Tim22 (Timm22) from Mus musculus (Mouse).